Consider the following 400-residue polypeptide: CinA-like protein (400 aa).

The protein belongs to the CinA family.

The polypeptide is CinA-like protein (Sulfurihydrogenibium sp. (strain YO3AOP1)).